The sequence spans 656 residues: DNA ligase (656 aa).

NAD(+) contacts are provided by residues 32-36 (DAIYD) and 81-82 (SL). Lysine 112 functions as the N6-AMP-lysine intermediate in the catalytic mechanism. Arginine 133, glutamate 167, and lysine 306 together coordinate NAD(+). Zn(2+)-binding residues include cysteine 400, cysteine 403, cysteine 416, and cysteine 421. Positions 577 to 656 (KSSSVFNNKT…ELLKRLKELD (80 aa)) constitute a BRCT domain.

Belongs to the NAD-dependent DNA ligase family. LigA subfamily. Mg(2+) serves as cofactor. The cofactor is Mn(2+).

It catalyses the reaction NAD(+) + (deoxyribonucleotide)n-3'-hydroxyl + 5'-phospho-(deoxyribonucleotide)m = (deoxyribonucleotide)n+m + AMP + beta-nicotinamide D-nucleotide.. Its function is as follows. DNA ligase that catalyzes the formation of phosphodiester linkages between 5'-phosphoryl and 3'-hydroxyl groups in double-stranded DNA using NAD as a coenzyme and as the energy source for the reaction. It is essential for DNA replication and repair of damaged DNA. This Helicobacter pylori (strain ATCC 700392 / 26695) (Campylobacter pylori) protein is DNA ligase.